Consider the following 603-residue polypeptide: Adenine deaminase 1 (603 aa).

Belongs to the metallo-dependent hydrolases superfamily. Adenine deaminase family. It depends on Mn(2+) as a cofactor.

The catalysed reaction is adenine + H2O + H(+) = hypoxanthine + NH4(+). The chain is Adenine deaminase 1 from Carboxydothermus hydrogenoformans (strain ATCC BAA-161 / DSM 6008 / Z-2901).